The primary structure comprises 126 residues: Prefoldin subunit beta (126 aa).

The protein belongs to the prefoldin subunit beta family. Heterohexamer of two alpha and four beta subunits.

The protein localises to the cytoplasm. In terms of biological role, molecular chaperone capable of stabilizing a range of proteins. Seems to fulfill an ATP-independent, HSP70-like function in archaeal de novo protein folding. This Saccharolobus islandicus (strain Y.N.15.51 / Yellowstone #2) (Sulfolobus islandicus) protein is Prefoldin subunit beta.